Consider the following 88-residue polypeptide: Exodeoxyribonuclease 7 small subunit (88 aa).

The protein belongs to the XseB family. Heterooligomer composed of large and small subunits.

The protein localises to the cytoplasm. The catalysed reaction is Exonucleolytic cleavage in either 5'- to 3'- or 3'- to 5'-direction to yield nucleoside 5'-phosphates.. Functionally, bidirectionally degrades single-stranded DNA into large acid-insoluble oligonucleotides, which are then degraded further into small acid-soluble oligonucleotides. The polypeptide is Exodeoxyribonuclease 7 small subunit (Bordetella petrii (strain ATCC BAA-461 / DSM 12804 / CCUG 43448)).